Consider the following 115-residue polypeptide: Large ribosomal subunit protein bL19 (115 aa).

This sequence belongs to the bacterial ribosomal protein bL19 family.

Functionally, this protein is located at the 30S-50S ribosomal subunit interface and may play a role in the structure and function of the aminoacyl-tRNA binding site. The polypeptide is Large ribosomal subunit protein bL19 (Kosmotoga olearia (strain ATCC BAA-1733 / DSM 21960 / TBF 19.5.1)).